The chain runs to 2664 residues: Non-reducing polyketide synthase sorB (2664 aa).

The tract at residues 21–45 (KSAPQSGNTADDIPNAASQPDTTST) is disordered. A compositionally biased stretch (polar residues) spans 36–45 (AASQPDTTST). Positions 112–281 (ADHARRLAEW…TTPSRIASDL (170 aa)) are N-terminal acylcarrier protein transacylase domain (SAT). Catalysis depends on cysteine 184, which acts as the Nucleophile; for transacylase activity. The Proton donor/acceptor; for transacylase activity role is filled by histidine 302. The 422-residue stretch at 428 to 849 (DNDIAVIGMS…GSNASMVIKQ (422 aa)) folds into the Ketosynthase family 3 (KS3) domain. Residues cysteine 596, histidine 731, and histidine 772 each act as for beta-ketoacyl synthase activity in the active site. The tract at residues 961–1276 (CFGGQVSKSV…TQGTRQLADV (316 aa)) is malonyl-CoA:ACP transacylase (MAT) domain. The tract at residues 1345–1477 (PGLYTFMGYG…GQLEFHRADD (133 aa)) is N-terminal hotdog fold. The PKS/mFAS DH domain maps to 1345-1663 (PGLYTFMGYG…FSARSMSELF (319 aa)). The product template (PT) domain stretch occupies residues 1376–1548 (VSGYTLGKTV…PSESAGRAVK (173 aa)). Residues 1507–1663 (DEVIQGQSIY…FSARSMSELF (157 aa)) are C-terminal hotdog fold. A Carrier domain is found at 1711-1785 (TELWAKLLPV…GILAFLQSTL (75 aa)). O-(pantetheine 4'-phosphoryl)serine is present on serine 1745. Residues 1789 to 1820 (GEDDASQSSDAASSSRNTPPSSNDGILATPSP) form a disordered region. Low complexity predominate over residues 1794–1803 (SQSSDAASSS). A methyltransferase domain region spans residues 2015–2197 (FQLMADFLSR…DAGYKHVEWT (183 aa)). An NADPH-binding (R) domain region spans residues 2281-2526 (VTGTTGSLGS…TLRSFPAVEG (246 aa)).

Pantetheine 4'-phosphate is required as a cofactor.

The protein operates within secondary metabolite biosynthesis. Functionally, non-reducing polyketide synthase; part of the gene cluster that mediates the biosynthesis of sorbicillinoids, a diverse group of yellow secondary metabolites that restrict growth of competing pathogenic fungi but not of bacteria. Sorbicillinoids biosynthesis requires the action of two PKSs. SorA iteratively combines three acetyl units and the growing chain is modified by the ketoacyl reductase subunit, and optional by the enoyl reductase subunit in the second cycle. The polyketide is then handed over to the PKS SorB, which adds three more acetyl units, and two methyl groups. SorB releases an aldehyde, which undergoes spontaneous cyclization resulting in the formation of sorbicillin or 2',3'-dihydrosorbicillin. The monooxygenase sorC oxidizes sorbicillin and 2',3'-dihydrosorbicillin to 2',3'-dihydrosorbicillinol and sorbicillinol, respectively. The oxidoreductase sorD further converts sorbicillinol into oxosorbicillinol. Sorbicillinol is the building block for the other sorbicillinoids such as disorbicillinol, bisvertinolon, and dihydrobisvertinolone. In Penicillium rubens (strain ATCC 28089 / DSM 1075 / NRRL 1951 / Wisconsin 54-1255) (Penicillium chrysogenum), this protein is Non-reducing polyketide synthase sorB.